The primary structure comprises 447 residues: Dihydrolipoyllysine-residue acetyltransferase component of pyruvate dehydrogenase complex (447 aa).

The region spanning 2–78 (PINITMPALS…KVNALIAVLA (77 aa)) is the Lipoyl-binding domain. Lysine 43 carries the post-translational modification N6-lipoyllysine. Positions 91-140 (GNGAAGAVPAPKPKETAETAPAAAPAPAAAPAPQAAAPASPAPADGEGKR) are disordered. The segment covering 108 to 134 (ETAPAAAPAPAAAPAPQAAAPASPAPA) has biased composition (low complexity). The Peripheral subunit-binding (PSBD) domain occupies 142 to 179 (FSSPLARRLAKEAGIDLSAIAGSGPHGRVVKKDVETAV). Residue histidine 420 is part of the active site.

The protein belongs to the 2-oxoacid dehydrogenase family. As to quaternary structure, forms a 24-polypeptide structural core with octahedral symmetry. The cofactor is (R)-lipoate.

The enzyme catalyses N(6)-[(R)-dihydrolipoyl]-L-lysyl-[protein] + acetyl-CoA = N(6)-[(R)-S(8)-acetyldihydrolipoyl]-L-lysyl-[protein] + CoA. In terms of biological role, the pyruvate dehydrogenase complex catalyzes the overall conversion of pyruvate to acetyl-CoA and CO(2). It contains multiple copies of three enzymatic components: pyruvate dehydrogenase (E1), dihydrolipoamide acetyltransferase (E2) and lipoamide dehydrogenase (E3). This chain is Dihydrolipoyllysine-residue acetyltransferase component of pyruvate dehydrogenase complex (pdhC), found in Rhizobium meliloti (strain 1021) (Ensifer meliloti).